A 502-amino-acid polypeptide reads, in one-letter code: Glutamate--tRNA ligase (502 aa).

The 'HIGH' region signature appears at Pro-9–Thr-19. Residues Cys-106, Cys-108, Cys-133, and His-135 each contribute to the Zn(2+) site. A 'KMSKS' region motif is present at residues Lys-250 to Arg-254. Lys-253 contacts ATP.

The protein belongs to the class-I aminoacyl-tRNA synthetase family. Glutamate--tRNA ligase type 1 subfamily. As to quaternary structure, monomer. The cofactor is Zn(2+).

The protein localises to the cytoplasm. It carries out the reaction tRNA(Glu) + L-glutamate + ATP = L-glutamyl-tRNA(Glu) + AMP + diphosphate. Its function is as follows. Catalyzes the attachment of glutamate to tRNA(Glu) in a two-step reaction: glutamate is first activated by ATP to form Glu-AMP and then transferred to the acceptor end of tRNA(Glu). This chain is Glutamate--tRNA ligase, found in Protochlamydia amoebophila (strain UWE25).